The chain runs to 115 residues: MKLCVIIIASLMVASVSGRLRKIKGTELDKKMLLEKLGHGMDIRFEETPRACSKKAGEKCKSNCDCCGYSTLCGYITEGKEVKYQCMSKTSNNKILNTVGLGVNAIENMLSFCFR.

An N-terminal signal peptide occupies residues 1–18 (MKLCVIIIASLMVASVSG). A propeptide spanning residues 19-51 (RLRKIKGTELDKKMLLEKLGHGMDIRFEETPRA) is cleaved from the precursor. 4 disulfides stabilise this stretch: cysteine 52-cysteine 67, cysteine 60-cysteine 73, cysteine 64-cysteine 113, and cysteine 66-cysteine 86.

This sequence belongs to the neurotoxin 03 (Tx2) family. 02 subfamily. Expressed by the venom gland.

The protein resides in the secreted. Functionally, probable ion channel inhibitor. The chain is U31-theraphotoxin-Cg1a from Chilobrachys guangxiensis (Chinese earth tiger tarantula).